A 697-amino-acid polypeptide reads, in one-letter code: Sodium-dependent phosphate transport protein 2B (697 aa).

Positions 1-45 (MAPWPELENAQPNPGKFIEGASGPQSSIPAKDKEASKTNDNGTPV) are disordered. The Cytoplasmic segment spans residues 1 to 91 (MAPWPELENA…WSERDTKGKT (91 aa)). The helical transmembrane segment at 92 to 112 (LCIFQGVGKFILLLGFLYLFV) threads the bilayer. Residues 113-136 (CSLDVLSSAFQLVGGKVAGQFFSN) are Extracellular-facing. The helical transmembrane segment at 137–157 (NSIMSNPVAGLVIGVLVTVMV) threads the bilayer. The Cytoplasmic portion of the chain corresponds to 158-213 (QSSSTSSSIIVSMVASSLLTVRAAIPIIMGANIGTSITNTIVALMQAGDRNEFRRA). Residues 214 to 234 (FAGATVHDFFNWLSVFVLLPL) traverse the membrane as a helical segment. Residues 235–363 (EAATHYLEIL…FVNFSLPDLA (129 aa)) are Extracellular-facing. N-linked (GlcNAc...) asparagine glycans are attached at residues Asn-295, Asn-308, Asn-321, and Asn-356. An intrachain disulfide couples Cys-303 to Cys-350. The chain crosses the membrane as a helical span at residues 364 to 384 (VGIILLTVSLVVLCGCLIMIV). Residues 385–408 (KLLGSVLRGQVATVIKKTLNTDFP) lie on the Cytoplasmic side of the membrane. The chain crosses the membrane as a helical span at residues 409 to 429 (FPFAWLTGYLAILVGAGMTFI). Topologically, residues 430 to 486 (VQSSSVFTSAMTPLIGIGVISIERAYPLTLGSNIGTTTTAILAALASPGNTLRSSLQ) are extracellular. Residues 487-507 (IALCHFFFNISGILLWYPIPF) traverse the membrane as a helical segment. The Cytoplasmic segment spans residues 508-526 (TRLPIRLAKGLGNISAKYR). Residues 527–547 (WFAVFYLIFFFFVTPLTVFGL) traverse the membrane as a helical segment. Residues 548-551 (SLAG) lie on the Extracellular side of the membrane. The chain crosses the membrane as a helical span at residues 552 to 572 (WPVLVGVGVPIILLLLLVLCL). Over 573–696 (RMLQFRCPRI…SMKALSNTTV (124 aa)) the chain is Cytoplasmic.

It belongs to the SLC34A transporter family. Highly abundant in the ileum of small intestine, whereas it is almost absent in the duodenum and in the jejunum.

The protein resides in the apical cell membrane. The catalysed reaction is 3 Na(+)(out) + phosphate(out) = 3 Na(+)(in) + phosphate(in). In terms of biological role, involved in actively transporting phosphate into cells via Na(+) cotransport. The chain is Sodium-dependent phosphate transport protein 2B (Slc34a2) from Mus musculus (Mouse).